The primary structure comprises 417 residues: Serine hydroxymethyltransferase (417 aa).

(6S)-5,6,7,8-tetrahydrofolate contacts are provided by residues leucine 121 and 125-127 (GHL). Lysine 229 is modified (N6-(pyridoxal phosphate)lysine). 355–357 (SPF) provides a ligand contact to (6S)-5,6,7,8-tetrahydrofolate.

Belongs to the SHMT family. In terms of assembly, homodimer. The cofactor is pyridoxal 5'-phosphate.

Its subcellular location is the cytoplasm. It carries out the reaction (6R)-5,10-methylene-5,6,7,8-tetrahydrofolate + glycine + H2O = (6S)-5,6,7,8-tetrahydrofolate + L-serine. It functions in the pathway one-carbon metabolism; tetrahydrofolate interconversion. It participates in amino-acid biosynthesis; glycine biosynthesis; glycine from L-serine: step 1/1. Functionally, catalyzes the reversible interconversion of serine and glycine with tetrahydrofolate (THF) serving as the one-carbon carrier. This reaction serves as the major source of one-carbon groups required for the biosynthesis of purines, thymidylate, methionine, and other important biomolecules. Also exhibits THF-independent aldolase activity toward beta-hydroxyamino acids, producing glycine and aldehydes, via a retro-aldol mechanism. This Klebsiella pneumoniae subsp. pneumoniae (strain ATCC 700721 / MGH 78578) protein is Serine hydroxymethyltransferase.